Here is an 860-residue protein sequence, read N- to C-terminus: Leucine--tRNA ligase (860 aa).

Residues 42 to 52 (PYPSGRLHMGH) carry the 'HIGH' region motif. The 'KMSKS' region motif lies at 619-623 (KMSKS). An ATP-binding site is contributed by lysine 622.

This sequence belongs to the class-I aminoacyl-tRNA synthetase family.

It localises to the cytoplasm. The catalysed reaction is tRNA(Leu) + L-leucine + ATP = L-leucyl-tRNA(Leu) + AMP + diphosphate. The sequence is that of Leucine--tRNA ligase from Shigella boydii serotype 18 (strain CDC 3083-94 / BS512).